Reading from the N-terminus, the 212-residue chain is MNDAALPPDVSAALANGLQAQSLDADFAAPLLRYLTLLVRWNKTYNLTAVRDPREMVTRHLLDSLAMQPYIVSGTLADLGTGPGLPGIPLAITRPQLQVTLVESNGKKARFMREALRHLALGNARVAEARAEAVDEPAAYDHLTARALDTLAGIIAVGGHLLRPGGSLLAMKGVYPREEIAALPAGWRVGDVHPLQVPGLEGERHLVVVHKD.

Residues Gly-80, Leu-85, 131–132 (AE), and Arg-146 contribute to the S-adenosyl-L-methionine site.

It belongs to the methyltransferase superfamily. RNA methyltransferase RsmG family.

It localises to the cytoplasm. It carries out the reaction guanosine(527) in 16S rRNA + S-adenosyl-L-methionine = N(7)-methylguanosine(527) in 16S rRNA + S-adenosyl-L-homocysteine. Specifically methylates the N7 position of guanine in position 527 of 16S rRNA. The sequence is that of Ribosomal RNA small subunit methyltransferase G from Xanthomonas campestris pv. campestris (strain B100).